The following is a 270-amino-acid chain: Phthiotriol/phenolphthiotriol dimycocerosates methyltransferase (270 aa).

It belongs to the methyltransferase superfamily. Phthiotriol/phenolphthiotriol dimycocerosates methyltransferase family.

Catalyzes the methylation of the lipid moiety of the intermediate compounds phthiotriol and glycosylated phenolphthiotriol dimycoserosates to form phthiocerol dimycocerosates (DIM A) and glycosylated phenolphthiocerol dimycocerosates (PGL). This chain is Phthiotriol/phenolphthiotriol dimycocerosates methyltransferase, found in Mycobacterium bovis (strain ATCC BAA-935 / AF2122/97).